A 156-amino-acid chain; its full sequence is Gene 55 protein (156 aa).

The disordered stretch occupies residues 132–156; sequence KRRWSGGNASSHEERMRGPFTEVAE.

This is Gene 55 protein (55) from Mycobacterium phage L5 (Mycobacteriophage L5).